Consider the following 262-residue polypeptide: Type III pantothenate kinase (262 aa).

Residue 5–12 (DAGNTRSK) coordinates ATP. Residues Tyr-102 and 110–113 (GSDR) contribute to the substrate site. Asp-112 functions as the Proton acceptor in the catalytic mechanism. Residue Asp-132 participates in K(+) binding. Residue Thr-135 participates in ATP binding. Thr-190 is a substrate binding site.

This sequence belongs to the type III pantothenate kinase family. In terms of assembly, homodimer. NH4(+) serves as cofactor. Requires K(+) as cofactor.

The protein resides in the cytoplasm. The enzyme catalyses (R)-pantothenate + ATP = (R)-4'-phosphopantothenate + ADP + H(+). It participates in cofactor biosynthesis; coenzyme A biosynthesis; CoA from (R)-pantothenate: step 1/5. In terms of biological role, catalyzes the phosphorylation of pantothenate (Pan), the first step in CoA biosynthesis. The sequence is that of Type III pantothenate kinase from Idiomarina loihiensis (strain ATCC BAA-735 / DSM 15497 / L2-TR).